The sequence spans 251 residues: POU class 2 homeobox associating factor 3 (251 aa).

Positions 5-27 (PKVYQGVRVKITVKELLQQRRAH) constitute an OCA domain. The tract at residues 24–45 (RRAHQAASGGTRSGGSSVHLSD) is disordered. The span at 31–40 (SGGTRSGGSS) shows a compositional bias: low complexity.

The protein belongs to the POU2AF family. As to quaternary structure, interacts with POU2F3 in a DNA-dependent manner; this interaction increases POU2F3 transactivation activity. As to expression, expressed in many cell types of epithelial, mesenchymal and hematopoietic origins. Expressed in tufs cells.

It is found in the cytoplasm. The protein resides in the nucleus. In terms of biological role, transcriptional coactivator that specifically associates with POU2F3. This complex drives the development of tuft cells, a rare a rare chemosensory cells that coordinate immune and neural functions within mucosal epithelial tissues. The sequence is that of POU class 2 homeobox associating factor 3 from Homo sapiens (Human).